We begin with the raw amino-acid sequence, 230 residues long: Uracil-DNA glycosylase (230 aa).

Aspartate 70 acts as the Proton acceptor in catalysis.

It belongs to the uracil-DNA glycosylase (UDG) superfamily. UNG family.

It is found in the cytoplasm. It catalyses the reaction Hydrolyzes single-stranded DNA or mismatched double-stranded DNA and polynucleotides, releasing free uracil.. In terms of biological role, excises uracil residues from the DNA which can arise as a result of misincorporation of dUMP residues by DNA polymerase or due to deamination of cytosine. This is Uracil-DNA glycosylase from Pseudomonas putida (strain ATCC 700007 / DSM 6899 / JCM 31910 / BCRC 17059 / LMG 24140 / F1).